Consider the following 1380-residue polypeptide: DNA-directed RNA polymerase subunit beta (1380 aa).

This sequence belongs to the RNA polymerase beta chain family. In terms of assembly, the RNAP catalytic core consists of 2 alpha, 1 beta, 1 beta' and 1 omega subunit. When a sigma factor is associated with the core the holoenzyme is formed, which can initiate transcription.

The catalysed reaction is RNA(n) + a ribonucleoside 5'-triphosphate = RNA(n+1) + diphosphate. In terms of biological role, DNA-dependent RNA polymerase catalyzes the transcription of DNA into RNA using the four ribonucleoside triphosphates as substrates. The protein is DNA-directed RNA polymerase subunit beta of Ehrlichia chaffeensis (strain ATCC CRL-10679 / Arkansas).